Consider the following 250-residue polypeptide: Histone H1.1 (250 aa).

The segment covering 1–11 (MSDSAVATSAS) has biased composition (polar residues). Disordered stretches follow at residues 1-52 (MSDS…QQMV) and 104-250 (QTKG…ATKK). The region spanning 44–118 (SHPPTQQMVD…GASGSFKLSA (75 aa)) is the H15 domain. The segment covering 122–133 (KDAKPKASAVEK) has biased composition (basic and acidic residues). Residues 140-161 (ASAARATKSKSSTSTTKKAAGA) show a composition bias toward low complexity. The segment covering 174-191 (KNVEKKKADKEKAKDAKK) has biased composition (basic and acidic residues). Residues 192–234 (TGTIKAKPTTAKAKSSATKPKTPKPKTTSAKPKKVVSATTPKK) are compositionally biased toward low complexity. Residues 235–250 (TAVKKPKAKTASATKK) show a composition bias toward basic residues.

The protein belongs to the histone H1/H5 family.

It is found in the nucleus. It localises to the chromosome. Histones H1 are necessary for the condensation of nucleosome chains into higher-order structures. The chain is Histone H1.1 (His1.1) from Drosophila virilis (Fruit fly).